The following is a 435-amino-acid chain: Zinc finger and BTB domain-containing protein 25 (435 aa).

The BTB domain occupies 1 to 107; it reads MDTASHSLVL…GIRFLHADYL (107 aa). Residues Lys-142, Lys-148, Lys-198, and Lys-204 each participate in a glycyl lysine isopeptide (Lys-Gly) (interchain with G-Cter in SUMO2) cross-link. Residues 238–260 form a C2H2-type 1 zinc finger; that stretch reads HLCHYCGERFDSRSNLRQHLHTH. Residues Lys-303 and Lys-330 each participate in a glycyl lysine isopeptide (Lys-Gly) (interchain with G-Cter in SUMO2) cross-link. A C2H2-type 2 zinc finger spans residues 349-371; it reads MSCTICGHKFPRKSQLLEHMYTH. Lys-405 is covalently cross-linked (Glycyl lysine isopeptide (Lys-Gly) (interchain with G-Cter in SUMO2)).

In terms of tissue distribution, expressed mainly in hematopoietic cells and testis.

The protein resides in the nucleus. Functionally, may be involved in transcriptional regulation. This is Zinc finger and BTB domain-containing protein 25 (ZBTB25) from Homo sapiens (Human).